Here is a 155-residue protein sequence, read N- to C-terminus: Gas vesicle protein K (155 aa).

It belongs to the gas vesicle GvpK family.

The protein resides in the gas vesicle. Functionally, might be involved in nucleating gas vesicle formation. Gas vesicles (GV) are hollow, gas filled proteinaceous nanostructures. During planktonic growth they allow positioning of the organism at a favorable depth for light or nutrient acquisition. The protein is Gas vesicle protein K of Dolichospermum flosaquae (Anabaena flos-aquae).